We begin with the raw amino-acid sequence, 513 residues long: Fructose import ATP-binding protein FruK (513 aa).

2 consecutive ABC transporter domains span residues 8–244 (VVMK…IGKS) and 262–505 (PGEK…IANT). 40–47 (GENGAGKS) is an ATP binding site.

The protein belongs to the ABC transporter superfamily. The complex is composed of an ATP-binding protein (FruK), two transmembrane proteins (FruF and FruG) and a solute-binding protein (FruE).

Its subcellular location is the cell membrane. It carries out the reaction D-fructose(out) + ATP + H2O = D-fructose(in) + ADP + phosphate + H(+). In terms of biological role, part of the high-affinity ABC transporter complex FruEKFG involved in fructose uptake. Can also transport ribose and xylose, with lower affinity. Probably responsible for energy coupling to the transport system. The sequence is that of Fructose import ATP-binding protein FruK from Bifidobacterium longum (strain NCC 2705).